A 337-amino-acid polypeptide reads, in one-letter code: Inositol 2-dehydrogenase (337 aa).

The protein belongs to the Gfo/Idh/MocA family. As to quaternary structure, homotetramer.

The enzyme catalyses myo-inositol + NAD(+) = scyllo-inosose + NADH + H(+). Its function is as follows. Involved in the oxidation of myo-inositol (MI) to 2-keto-myo-inositol (2KMI or 2-inosose). In Burkholderia ambifaria (strain MC40-6), this protein is Inositol 2-dehydrogenase.